A 482-amino-acid polypeptide reads, in one-letter code: Protein DETOXIFICATION 9 (482 aa).

The next 12 membrane-spanning stretches (helical) occupy residues 32-49 (VASM…QYLL), 64-84 (ALAG…GVLF), 111-131 (FTSI…WMFM), 144-164 (IAEL…GYSV), 180-200 (PMVL…WLMV), 209-229 (GAAA…WVYM), 261-281 (AMMC…SGLL), 289-309 (SVIS…NGIG), 332-352 (AAAA…SLFL), 374-394 (ITPI…LSGI), 403-423 (IGAY…GLLL), and 435-455 (WAGL…VIGF).

It belongs to the multi antimicrobial extrusion (MATE) (TC 2.A.66.1) family.

The protein localises to the membrane. In Arabidopsis thaliana (Mouse-ear cress), this protein is Protein DETOXIFICATION 9.